The primary structure comprises 303 residues: Recombination-associated protein RdgC (303 aa).

Belongs to the RdgC family.

The protein resides in the cytoplasm. It localises to the nucleoid. In terms of biological role, may be involved in recombination. The protein is Recombination-associated protein RdgC of Shewanella loihica (strain ATCC BAA-1088 / PV-4).